Consider the following 485-residue polypeptide: Adenylate kinase 8 (485 aa).

Adenylate kinase stretches follow at residues 58–258 (PRVF…TFVL) and 269–471 (PRIL…SYIV). 67 to 72 (ASGKHT) contacts ATP. An NMP 1 region spans residues 87–113 (TPENVLSSDVSLLVKEAQSYRDKGQEV). AMP is bound by residues 140 to 143 (GFPK) and glutamine 147. Residues 177-206 (GKRIDITDGEVYHTTFDWPSDPAVQRNLVE) form an LID 1 region. Arginine 218 contacts AMP. Residue 278–283 (GSGRSL) coordinates ATP. The tract at residues 298–327 (CCGQVLKEAVADQTKLGELIQPYIENDQQV) is NMP 2. Residues 325–327 (QQV), 354–357 (GFPQ), and glutamine 361 contribute to the AMP site. The segment at 391 to 424 (LCMTDPVSGERYHSIYKPAPRSEVQERLQQNPKY) is LID 2. Residue arginine 432 participates in AMP binding.

The protein belongs to the adenylate kinase family.

It is found in the cytoplasm. Its subcellular location is the cytosol. It catalyses the reaction AMP + ATP = 2 ADP. The catalysed reaction is a 2'-deoxyribonucleoside 5'-diphosphate + ATP = a 2'-deoxyribonucleoside 5'-triphosphate + ADP. The enzyme catalyses a ribonucleoside 5'-diphosphate + ATP = a ribonucleoside 5'-triphosphate + ADP. Functionally, nucleoside monophosphate (NMP) kinase that catalyzes the reversible transfer of the terminal phosphate group between nucleoside triphosphates and monophosphates. Has highest activity toward AMP, and weaker activity toward dAMP, CMP and dCMP. Also displays broad nucleoside diphosphate kinase activity. The sequence is that of Adenylate kinase 8 (ak8) from Xenopus laevis (African clawed frog).